A 404-amino-acid chain; its full sequence is Glycosylated lysosomal membrane protein (404 aa).

An N-terminal signal peptide occupies residues 1-26; it reads MSGYEKPSRGWGFCALSPVLLSLLMA. Residues 27-370 are Lumenal-facing; the sequence is APLGLLGEET…VDALSPLVLG (344 aa). N-linked (GlcNAc...) asparagine glycosylation is found at asparagine 63, asparagine 132, asparagine 157, asparagine 185, and asparagine 228. The chain crosses the membrane as a helical span at residues 371-391; that stretch reads IMAVALGAPALMLLAGGLFLL. The Cytoplasmic segment spans residues 392 to 404; the sequence is LGRKRDSEYQSIN. Residues 400 to 404 carry the Lysosomal targeting motif motif; the sequence is YQSIN.

Belongs to the GLMP family. As to quaternary structure, interacts (via lumenal domain) with lysosomal protein MFSD1; the interaction starts while both proteins are still in the endoplasmic reticulum and is required for stabilization of MFSD1 in lysosomes but has no direct effect on its targeting to lysosomes or transporter activity. Highly N-glycosylated. N-glycosylation is essential for GLMP stability and for MFSD1 lysosomal localization.

The protein resides in the lysosome membrane. Functionally, required to protect lysosomal transporter MFSD1 from lysosomal proteolysis and for MFSD1 lysosomal localization. The chain is Glycosylated lysosomal membrane protein from Bos taurus (Bovine).